A 128-amino-acid chain; its full sequence is MPTIQQLIRRGRKTKASKTASPALERCPQKRGVCTRVYTTTPKKPNSALRKVARVRLSNKIEVTAYIPGEGHNLQEHSIVLIRGGRVKDLPGVRYHIVRGSLDTSGVADRRNSRSKYGAKRPKEAAAK.

The disordered stretch occupies residues 1–25 (MPTIQQLIRRGRKTKASKTASPALE). The residue at position 89 (Asp89) is a 3-methylthioaspartic acid. The interval 101-128 (SLDTSGVADRRNSRSKYGAKRPKEAAAK) is disordered.

The protein belongs to the universal ribosomal protein uS12 family. As to quaternary structure, part of the 30S ribosomal subunit. Contacts proteins S8 and S17. May interact with IF1 in the 30S initiation complex.

Functionally, with S4 and S5 plays an important role in translational accuracy. Interacts with and stabilizes bases of the 16S rRNA that are involved in tRNA selection in the A site and with the mRNA backbone. Located at the interface of the 30S and 50S subunits, it traverses the body of the 30S subunit contacting proteins on the other side and probably holding the rRNA structure together. The combined cluster of proteins S8, S12 and S17 appears to hold together the shoulder and platform of the 30S subunit. In Chlorobium phaeobacteroides (strain BS1), this protein is Small ribosomal subunit protein uS12.